A 317-amino-acid polypeptide reads, in one-letter code: L-lactate dehydrogenase (317 aa).

NAD(+) contacts are provided by residues Val-17, Asp-38, Lys-43, Tyr-69, and 83-84 (GA). Substrate-binding residues include Gln-86 and Arg-92. NAD(+) contacts are provided by residues Ser-105, 122 to 124 (ATN), and Ser-147. Residue 124–127 (NPVD) participates in substrate binding. Substrate is bound at residue 152–155 (DTAR). Arg-157 and His-172 together coordinate beta-D-fructose 1,6-bisphosphate. Catalysis depends on His-179, which acts as the Proton acceptor. The residue at position 224 (Tyr-224) is a Phosphotyrosine. Thr-233 lines the substrate pocket.

Belongs to the LDH/MDH superfamily. LDH family. As to quaternary structure, homotetramer.

Its subcellular location is the cytoplasm. It carries out the reaction (S)-lactate + NAD(+) = pyruvate + NADH + H(+). It participates in fermentation; pyruvate fermentation to lactate; (S)-lactate from pyruvate: step 1/1. Its activity is regulated as follows. Allosterically activated by fructose 1,6-bisphosphate (FBP). In terms of biological role, catalyzes the conversion of lactate to pyruvate. The sequence is that of L-lactate dehydrogenase from Bacillus caldotenax.